A 305-amino-acid polypeptide reads, in one-letter code: MRLVFMGTPDFSVPVLEALVAAGHEIACVYSQPPRPAGRGKKDRPSPVQARAEALGLPVRHPVSLRSDEALADFAGLQAEVAVVVAYGLILPQAILDAPTRGCLNIHASLLPRWRGAAPIHRAIMAGDAQTGVCIMQMEAGLDTGPVLAREAVDIGPEETTAQLHDRLSALGAALIVDTLARLDQLEAVPQPEDGVTYAAKIDKAEAQVDWDQPAEDVDRLIRGLSPFPGAWTLLGDTRVKLLGSRIAEASGVPGTVRLNPLRVVCGTGAVELTQVQRAGKAVQSAADFLNGSAIEDGTLFKGKS.

Serine 109–proline 112 lines the (6S)-5,6,7,8-tetrahydrofolate pocket.

The protein belongs to the Fmt family.

It carries out the reaction L-methionyl-tRNA(fMet) + (6R)-10-formyltetrahydrofolate = N-formyl-L-methionyl-tRNA(fMet) + (6S)-5,6,7,8-tetrahydrofolate + H(+). Its function is as follows. Attaches a formyl group to the free amino group of methionyl-tRNA(fMet). The formyl group appears to play a dual role in the initiator identity of N-formylmethionyl-tRNA by promoting its recognition by IF2 and preventing the misappropriation of this tRNA by the elongation apparatus. The protein is Methionyl-tRNA formyltransferase of Roseobacter denitrificans (strain ATCC 33942 / OCh 114) (Erythrobacter sp. (strain OCh 114)).